The chain runs to 369 residues: tRNA/tmRNA (uracil-C(5))-methyltransferase (369 aa).

S-adenosyl-L-methionine contacts are provided by Gln190, Tyr218, Asn223, Glu239, and Asp301. The active-site Nucleophile is Cys326. Glu360 acts as the Proton acceptor in catalysis.

It belongs to the class I-like SAM-binding methyltransferase superfamily. RNA M5U methyltransferase family. TrmA subfamily.

It catalyses the reaction uridine(54) in tRNA + S-adenosyl-L-methionine = 5-methyluridine(54) in tRNA + S-adenosyl-L-homocysteine + H(+). The catalysed reaction is uridine(341) in tmRNA + S-adenosyl-L-methionine = 5-methyluridine(341) in tmRNA + S-adenosyl-L-homocysteine + H(+). Functionally, dual-specificity methyltransferase that catalyzes the formation of 5-methyluridine at position 54 (m5U54) in all tRNAs, and that of position 341 (m5U341) in tmRNA (transfer-mRNA). The polypeptide is tRNA/tmRNA (uracil-C(5))-methyltransferase (Vibrio atlanticus (strain LGP32) (Vibrio splendidus (strain Mel32))).